Consider the following 909-residue polypeptide: E3 ubiquitin-protein ligase MARCHF6 (909 aa).

Met-1 carries the N-acetylmethionine modification. The RING-CH-type zinc finger occupies Met-1–Thr-62. At Met-1–Arg-91 the chain is on the cytoplasmic side. 8 residues coordinate Zn(2+): Cys-9, Cys-12, Cys-26, Cys-28, His-36, Cys-39, Cys-52, and Cys-55. A helical transmembrane segment spans residues Tyr-92 to Cys-112. The Extracellular segment spans residues Arg-113 to Asp-142. The helical transmembrane segment at Cys-143–Leu-163 threads the bilayer. The Cytoplasmic segment spans residues Arg-164–Ser-283. The disordered stretch occupies residues Ala-186–Asp-256. The span at Gln-228–Ala-248 shows a compositional bias: acidic residues. Residues Leu-284 to Phe-304 traverse the membrane as a helical segment. Topologically, residues Ala-305–Thr-336 are extracellular. Residues Ile-337–Val-357 form a helical membrane-spanning segment. Over Lys-358–Ser-376 the chain is Cytoplasmic. A helical transmembrane segment spans residues Leu-377–Cys-397. Topologically, residues Ser-398–Met-421 are extracellular. A helical membrane pass occupies residues Phe-422–Leu-442. The Cytoplasmic segment spans residues Arg-443–Phe-480. A helical transmembrane segment spans residues Ile-481 to Ile-501. Residues Ile-502–Asp-519 are Extracellular-facing. Residues Ala-520–Leu-540 traverse the membrane as a helical segment. The Cytoplasmic segment spans residues Glu-541–Arg-631. The helical transmembrane segment at Ile-632–Thr-652 threads the bilayer. Over Leu-653 to Ala-677 the chain is Extracellular. The chain crosses the membrane as a helical span at residues Ala-678–Met-698. At Pro-699 to Leu-720 the chain is on the cytoplasmic side. Residues Ile-721–Val-741 form a helical membrane-spanning segment. Over Ile-742–Ala-763 the chain is Extracellular. The chain crosses the membrane as a helical span at residues Leu-764–Leu-784. Residues Lys-785 to Ser-814 are Cytoplasmic-facing. Residues Val-815–Gly-835 traverse the membrane as a helical segment. The Extracellular portion of the chain corresponds to Val-836–Arg-847. A helical membrane pass occupies residues Ile-848 to Gln-868. The Cytoplasmic segment spans residues Phe-869–Glu-909.

The protein belongs to the DOA10/MARCHF6 family. Interacts with DIO2. Interacts with SQLE. Post-translationally, auto-ubiquitinated, which results in proteasomal degradation. Deubiquitinated by USP19; protecting MARCHF6 from p97-mediated proteasomal degradation.

The protein resides in the endoplasmic reticulum membrane. It carries out the reaction S-ubiquitinyl-[E2 ubiquitin-conjugating enzyme]-L-cysteine + [acceptor protein]-L-lysine = [E2 ubiquitin-conjugating enzyme]-L-cysteine + N(6)-ubiquitinyl-[acceptor protein]-L-lysine.. The protein operates within protein modification; protein ubiquitination. Functionally, endoplasmic reticulum membrane-associated E3 ubiquitin ligase that plays a critical role in mitigating endoplasmic reticulum stress, the regulation of cholesterol and lipid homeostasis, and ferroptosis. Acts as a pivotal component of both the Ac/N-degron pathway (targeting the N-terminal acetyl group of substrates) and the ER-associated protein degradation-cytosol (ERAD-C) pathway (targeting misfolded substrates). For instance, mediates the degradation of Ac/N-degron-bearing proteins such as the G-protein regulator RGS2 and the lipid droplet protein PLIN2. Suppresses endoplasmic reticulum stress and ferroptosis through cytosolic POMC degradation. Prevents ferroptosis by acting as a NADPH sensor during lipid peroxidation through its C-terminal regulatory region. Facilitates also the degradation of selected endoplasmic reticulum proteins by associating with signal peptide peptidase for the turnover of endogenous tail-anchored proteins. Promotes ubiquitination of DIO2, leading to its degradation. By ubiquitinating and thereby modulating the stability of many proteins of the cholesterol pathway including SQLE, CYP51A1, CYP11A1 and HMGCR, acts as a crucial post-translational regulator of cholesterol synthesis. The chain is E3 ubiquitin-protein ligase MARCHF6 (Marchf6) from Mus musculus (Mouse).